The following is a 1193-amino-acid chain: Pyruvate carboxylase (1193 aa).

Residues 41-493 form the Biotin carboxylation domain; that stretch reads QFQKILVANR…WTTFIDDTPE (453 aa). 3 residues coordinate ATP: K159, E243, and H278. Positions 163 to 360 constitute an ATP-grasp domain; sequence RQLAIRCNVP…IVAAQIQIAA (198 aa). Residue R335 is part of the active site. Residues 579–847 form the Pyruvate carboxyltransferase domain; the sequence is CLIMDTTWRD…DPGLNSAHVR (269 aa). Residues 587-591 and R660 contribute to the substrate site; that span reads RDAHQ. Position 588 (D588) interacts with a divalent metal cation. Residues K756, H786, and H788 each contribute to the a divalent metal cation site. The residue at position 756 (K756) is an N6-carboxylysine. Residue T921 participates in substrate binding. The Biotinyl-binding domain occupies 1116–1191; that stretch reads KADVGDSSQV…DGQDLVCKIT (76 aa). K1157 is modified (N6-biotinyllysine).

Requires biotin as cofactor. Zn(2+) is required as a cofactor.

The protein localises to the cytoplasm. It carries out the reaction hydrogencarbonate + pyruvate + ATP = oxaloacetate + ADP + phosphate + H(+). It participates in carbohydrate biosynthesis; gluconeogenesis. In terms of biological role, pyruvate carboxylase catalyzes a 2-step reaction, involving the ATP-dependent carboxylation of the covalently attached biotin in the first step and the transfer of the carboxyl group to pyruvate in the second. The protein is Pyruvate carboxylase (pyc) of Aspergillus terreus.